We begin with the raw amino-acid sequence, 407 residues long: Putative colanic acid biosynthesis glycosyl transferase WcaI (407 aa).

It functions in the pathway slime biogenesis; slime polysaccharide biosynthesis. The polypeptide is Putative colanic acid biosynthesis glycosyl transferase WcaI (wcaI) (Escherichia coli (strain K12)).